The primary structure comprises 178 residues: Large ribosomal subunit protein bL25 (178 aa).

The protein belongs to the bacterial ribosomal protein bL25 family. CTC subfamily. Part of the 50S ribosomal subunit; part of the 5S rRNA/L5/L18/L25 subcomplex. Contacts the 5S rRNA. Binds to the 5S rRNA independently of L5 and L18.

Functionally, this is one of the proteins that binds to the 5S RNA in the ribosome where it forms part of the central protuberance. The chain is Large ribosomal subunit protein bL25 from Helicobacter pylori (strain Shi470).